The sequence spans 401 residues: Probable E3 ubiquitin-protein ligase RHC2A (401 aa).

A disordered region spans residues 41–93 (TPSDSFTTTTTTQHRSPTRFPPPSSSSSTPSASMHADNSPTPTIVTRTRSNRS). The span at 76 to 93 (ADNSPTPTIVTRTRSNRS) shows a compositional bias: polar residues. The RING-type; atypical zinc finger occupies 201 to 242 (CAVCKENFVLKSSAREMPCNHIYHPDCILPWLAIRNSCPVCR).

It catalyses the reaction S-ubiquitinyl-[E2 ubiquitin-conjugating enzyme]-L-cysteine + [acceptor protein]-L-lysine = [E2 ubiquitin-conjugating enzyme]-L-cysteine + N(6)-ubiquitinyl-[acceptor protein]-L-lysine.. The protein operates within protein modification; protein ubiquitination. Its function is as follows. Probable E3 ubiquitin-protein ligase that may possess E3 ubiquitin ligase activity in vitro. The chain is Probable E3 ubiquitin-protein ligase RHC2A from Arabidopsis thaliana (Mouse-ear cress).